We begin with the raw amino-acid sequence, 246 residues long: Acetoacetate decarboxylase (246 aa).

Catalysis depends on Lys-116, which acts as the Schiff-base intermediate with acetoacetate.

The protein belongs to the ADC family.

The catalysed reaction is acetoacetate + H(+) = acetone + CO2. Catalyzes the conversion of acetoacetate to acetone and carbon dioxide. In Burkholderia cenocepacia (strain ATCC BAA-245 / DSM 16553 / LMG 16656 / NCTC 13227 / J2315 / CF5610) (Burkholderia cepacia (strain J2315)), this protein is Acetoacetate decarboxylase.